Reading from the N-terminus, the 167-residue chain is NADH-quinone oxidoreductase subunit B (167 aa).

[4Fe-4S] cluster contacts are provided by C40, C41, C105, and C134.

The protein belongs to the complex I 20 kDa subunit family. In terms of assembly, NDH-1 is composed of 14 different subunits. Subunits NuoB, C, D, E, F, and G constitute the peripheral sector of the complex. The cofactor is [4Fe-4S] cluster.

It localises to the cell inner membrane. It carries out the reaction a quinone + NADH + 5 H(+)(in) = a quinol + NAD(+) + 4 H(+)(out). NDH-1 shuttles electrons from NADH, via FMN and iron-sulfur (Fe-S) centers, to quinones in the respiratory chain. The immediate electron acceptor for the enzyme in this species is believed to be ubiquinone. Couples the redox reaction to proton translocation (for every two electrons transferred, four hydrogen ions are translocated across the cytoplasmic membrane), and thus conserves the redox energy in a proton gradient. In Campylobacter jejuni subsp. jejuni serotype O:2 (strain ATCC 700819 / NCTC 11168), this protein is NADH-quinone oxidoreductase subunit B.